A 785-amino-acid chain; its full sequence is E3 UFM1-protein ligase 1 homolog (785 aa).

Positions 405–483 (ASFQDQDDDG…GGGGGNKKTV (79 aa)) are disordered.

The protein belongs to the UFL1 family.

Its function is as follows. E3 UFM1-protein ligase that mediates ufmylation of target proteins. In Drosophila pseudoobscura pseudoobscura (Fruit fly), this protein is E3 UFM1-protein ligase 1 homolog.